A 380-amino-acid polypeptide reads, in one-letter code: Histone deacetylase-like amidohydrolase (380 aa).

The Proton donor/acceptor role is filled by His144. The Zn(2+) site is built by Asp181, His183, and Asp269.

This sequence belongs to the histone deacetylase family. In terms of assembly, homotetramer; dimer of head-to-head dimers. The cofactor is Zn(2+).

Is inhibited by azobenzenes, stilbenes and arylazopyrazoles. Its function is as follows. Probable protein deacetylase that catalyzes deacetylation of acetylated lysine residues. In vitro, exhibits high activity against artificial HDAC (histone deacetylase) substrates containing acetylated and trifluoroacetylated lysine residues. Is not able to deacetylate acetylated polyamines. In Pseudomonas aeruginosa (strain ATCC 15692 / DSM 22644 / CIP 104116 / JCM 14847 / LMG 12228 / 1C / PRS 101 / PAO1), this protein is Histone deacetylase-like amidohydrolase.